We begin with the raw amino-acid sequence, 218 residues long: Probable transaldolase (218 aa).

The active-site Schiff-base intermediate with substrate is the Lys87.

It belongs to the transaldolase family. Type 3B subfamily.

It localises to the cytoplasm. The catalysed reaction is D-sedoheptulose 7-phosphate + D-glyceraldehyde 3-phosphate = D-erythrose 4-phosphate + beta-D-fructose 6-phosphate. It functions in the pathway carbohydrate degradation; pentose phosphate pathway; D-glyceraldehyde 3-phosphate and beta-D-fructose 6-phosphate from D-ribose 5-phosphate and D-xylulose 5-phosphate (non-oxidative stage): step 2/3. Transaldolase is important for the balance of metabolites in the pentose-phosphate pathway. This is Probable transaldolase from Bacteroides thetaiotaomicron (strain ATCC 29148 / DSM 2079 / JCM 5827 / CCUG 10774 / NCTC 10582 / VPI-5482 / E50).